The chain runs to 1586 residues: COP1-interactive protein 1 (1586 aa).

One can recognise an NAB domain in the interval Leu-10–Ile-84. Residues Val-88–Lys-119 form a disordered region. Coiled coils occupy residues Thr-128–Ser-411, Ala-437–Glu-1196, Leu-1225–Thr-1336, and Met-1372–Lys-1406. 5 LRR repeats span residues Ser-173–Leu-187, Glu-188–Lys-210, Asn-216–Arg-239, Thr-261–Ala-285, and Glu-287–Thr-309. Positions Asp-249–Ser-262 are enriched in basic and acidic residues. The segment at Asp-249–Glu-286 is disordered. Positions Lys-325–Glu-353 are disordered. 20 LRR repeats span residues Ile-384–Glu-410, Ala-437–Ala-461, Val-473–Asp-498, Ile-560–Glu-586, Val-613–Ala-637, Leu-649–Asp-674, Leu-768–Ala-792, Leu-824–Arg-850, Val-856–Ser-880, Glu-902–Leu-929, Leu-944–Ala-968, Gln-990–Leu-1014, Ile-1077–Asn-1101, Arg-1120–Ala-1144, Glu-1195–Gly-1220, Val-1247–Asn-1272, Met-1372–Ile-1396, Val-1398–Lys-1417, Ala-1426–Gly-1448, and Ile-1450–Lys-1474. Residues Gln-430–Ala-456 are disordered. Over residues Leu-444–Ser-455 the composition is skewed to polar residues. The segment at Leu-965–Glu-985 is disordered. Residues Val-1496 to Glu-1530 adopt a coiled-coil conformation.

Interacts with COP1 coiled-coil region. As to expression, mainly expressed in photosynthetic and vascular tissues. Accumulates in both dark-grown and light-grown seedlings roots and shoots, leaves and flowers (at protein level).

The protein resides in the cell membrane. It localises to the cytoplasm. The protein localises to the cytoskeleton. Its function is as follows. Positive regulator of abscisic acid (ABA)-mediated signaling pathways involved in abiotic stress responses (e.g. osmotic stress) and leading to various plant adaptation (e.g. stomata closure). The chain is COP1-interactive protein 1 from Arabidopsis thaliana (Mouse-ear cress).